Reading from the N-terminus, the 383-residue chain is Carbamoyl phosphate synthase small chain (383 aa).

A CPSase region spans residues 1 to 190; that stretch reads MPHPSSRQAH…FDQRLKQHPD (190 aa). 3 residues coordinate L-glutamine: Ser-51, Gly-242, and Gly-244. The region spanning 194–381 is the Glutamine amidotransferase type-1 domain; sequence RVVAIDFGIK…VALMADRRDV (188 aa). Cys-271 acts as the Nucleophile in catalysis. L-glutamine is bound by residues Leu-272, Gln-275, Asn-311, Gly-313, and Phe-314. Residues His-354 and Glu-356 contribute to the active site.

This sequence belongs to the CarA family. As to quaternary structure, composed of two chains; the small (or glutamine) chain promotes the hydrolysis of glutamine to ammonia, which is used by the large (or ammonia) chain to synthesize carbamoyl phosphate. Tetramer of heterodimers (alpha,beta)4.

The enzyme catalyses hydrogencarbonate + L-glutamine + 2 ATP + H2O = carbamoyl phosphate + L-glutamate + 2 ADP + phosphate + 2 H(+). It catalyses the reaction L-glutamine + H2O = L-glutamate + NH4(+). The protein operates within amino-acid biosynthesis; L-arginine biosynthesis; carbamoyl phosphate from bicarbonate: step 1/1. Its pathway is pyrimidine metabolism; UMP biosynthesis via de novo pathway; (S)-dihydroorotate from bicarbonate: step 1/3. In terms of biological role, small subunit of the glutamine-dependent carbamoyl phosphate synthetase (CPSase). CPSase catalyzes the formation of carbamoyl phosphate from the ammonia moiety of glutamine, carbonate, and phosphate donated by ATP, constituting the first step of 2 biosynthetic pathways, one leading to arginine and/or urea and the other to pyrimidine nucleotides. The small subunit (glutamine amidotransferase) binds and cleaves glutamine to supply the large subunit with the substrate ammonia. In Parasynechococcus marenigrum (strain WH8102), this protein is Carbamoyl phosphate synthase small chain.